We begin with the raw amino-acid sequence, 400 residues long: Elongation factor Tu (400 aa).

One can recognise a tr-type G domain in the interval Lys10–Glu209. Residues Gly19–Thr26 are G1. Gly19–Thr26 lines the GTP pocket. Mg(2+) is bound at residue Thr26. The tract at residues Gly60–Asn64 is G2. The G3 stretch occupies residues Asp81–Gly84. Residues Asp81–His85 and Asn136–Asp139 contribute to the GTP site. A G4 region spans residues Asn136–Asp139. The segment at Ser174 to Leu176 is G5.

The protein belongs to the TRAFAC class translation factor GTPase superfamily. Classic translation factor GTPase family. EF-Tu/EF-1A subfamily. As to quaternary structure, monomer.

The protein localises to the cytoplasm. It catalyses the reaction GTP + H2O = GDP + phosphate + H(+). GTP hydrolase that promotes the GTP-dependent binding of aminoacyl-tRNA to the A-site of ribosomes during protein biosynthesis. This Heliobacterium modesticaldum (strain ATCC 51547 / Ice1) protein is Elongation factor Tu.